A 345-amino-acid polypeptide reads, in one-letter code: Biotin synthase (345 aa).

The Radical SAM core domain occupies 39-266 (NEVQVSTLLS…ASHVRLSAGR (228 aa)). Residues Cys54, Cys58, and Cys61 each contribute to the [4Fe-4S] cluster site. Residues Cys98, Cys129, Cys189, and Arg261 each coordinate [2Fe-2S] cluster.

It belongs to the radical SAM superfamily. Biotin synthase family. Homodimer. Requires [4Fe-4S] cluster as cofactor. [2Fe-2S] cluster is required as a cofactor.

It catalyses the reaction (4R,5S)-dethiobiotin + (sulfur carrier)-SH + 2 reduced [2Fe-2S]-[ferredoxin] + 2 S-adenosyl-L-methionine = (sulfur carrier)-H + biotin + 2 5'-deoxyadenosine + 2 L-methionine + 2 oxidized [2Fe-2S]-[ferredoxin]. The protein operates within cofactor biosynthesis; biotin biosynthesis; biotin from 7,8-diaminononanoate: step 2/2. Catalyzes the conversion of dethiobiotin (DTB) to biotin by the insertion of a sulfur atom into dethiobiotin via a radical-based mechanism. This Idiomarina loihiensis (strain ATCC BAA-735 / DSM 15497 / L2-TR) protein is Biotin synthase.